The following is an 81-amino-acid chain: ATP synthase subunit C, plastid (81 aa).

The next 2 membrane-spanning stretches (helical) occupy residues 3–23 and 57–77; these read PIIS…ASIG and LAFM…LLFA.

This sequence belongs to the ATPase C chain family. F-type ATPases have 2 components, F(1) - the catalytic core - and F(0) - the membrane proton channel. F(1) has five subunits: alpha(3), beta(3), gamma(1), delta(1), epsilon(1). F(0) has four main subunits: a(1), b(1), b'(1) and c(10-14). The alpha and beta chains form an alternating ring which encloses part of the gamma chain. F(1) is attached to F(0) by a central stalk formed by the gamma and epsilon chains, while a peripheral stalk is formed by the delta, b and b' chains.

Its subcellular location is the plastid membrane. Its function is as follows. F(1)F(0) ATP synthase produces ATP from ADP in the presence of a proton or sodium gradient. F-type ATPases consist of two structural domains, F(1) containing the extramembraneous catalytic core and F(0) containing the membrane proton channel, linked together by a central stalk and a peripheral stalk. During catalysis, ATP synthesis in the catalytic domain of F(1) is coupled via a rotary mechanism of the central stalk subunits to proton translocation. Key component of the F(0) channel; it plays a direct role in translocation across the membrane. A homomeric c-ring of between 10-14 subunits forms the central stalk rotor element with the F(1) delta and epsilon subunits. The protein is ATP synthase subunit C, plastid of Cuscuta gronovii (Common dodder).